Here is a 210-residue protein sequence, read N- to C-terminus: Uracil phosphoribosyltransferase (210 aa).

Residues Arg78, Arg103, and 130 to 138 (DPMLATGGS) contribute to the 5-phospho-alpha-D-ribose 1-diphosphate site. Uracil-binding positions include Ile193 and 198–200 (GDA). Residue Asp199 coordinates 5-phospho-alpha-D-ribose 1-diphosphate.

The protein belongs to the UPRTase family. It depends on Mg(2+) as a cofactor.

It catalyses the reaction UMP + diphosphate = 5-phospho-alpha-D-ribose 1-diphosphate + uracil. The protein operates within pyrimidine metabolism; UMP biosynthesis via salvage pathway; UMP from uracil: step 1/1. With respect to regulation, allosterically activated by GTP. Its function is as follows. Catalyzes the conversion of uracil and 5-phospho-alpha-D-ribose 1-diphosphate (PRPP) to UMP and diphosphate. This chain is Uracil phosphoribosyltransferase, found in Laribacter hongkongensis (strain HLHK9).